We begin with the raw amino-acid sequence, 161 residues long: Nucleotide-binding protein Sden_0770 (161 aa).

The protein belongs to the YajQ family.

In terms of biological role, nucleotide-binding protein. In Shewanella denitrificans (strain OS217 / ATCC BAA-1090 / DSM 15013), this protein is Nucleotide-binding protein Sden_0770.